A 213-amino-acid chain; its full sequence is Cytidylate kinase (213 aa).

An ATP-binding site is contributed by 9-17 (GPAASGKGT).

It belongs to the cytidylate kinase family. Type 1 subfamily.

Its subcellular location is the cytoplasm. The enzyme catalyses CMP + ATP = CDP + ADP. It carries out the reaction dCMP + ATP = dCDP + ADP. This is Cytidylate kinase from Caulobacter vibrioides (strain ATCC 19089 / CIP 103742 / CB 15) (Caulobacter crescentus).